Reading from the N-terminus, the 94-residue chain is Co-chaperonin GroES (94 aa).

Belongs to the GroES chaperonin family. As to quaternary structure, heptamer of 7 subunits arranged in a ring. Interacts with the chaperonin GroEL.

It is found in the cytoplasm. Together with the chaperonin GroEL, plays an essential role in assisting protein folding. The GroEL-GroES system forms a nano-cage that allows encapsulation of the non-native substrate proteins and provides a physical environment optimized to promote and accelerate protein folding. GroES binds to the apical surface of the GroEL ring, thereby capping the opening of the GroEL channel. The sequence is that of Co-chaperonin GroES from Bacillus licheniformis (strain ATCC 14580 / DSM 13 / JCM 2505 / CCUG 7422 / NBRC 12200 / NCIMB 9375 / NCTC 10341 / NRRL NRS-1264 / Gibson 46).